Reading from the N-terminus, the 588-residue chain is Adenine deaminase (588 aa).

It belongs to the metallo-dependent hydrolases superfamily. Adenine deaminase family. In terms of assembly, homodimer. Mn(2+) serves as cofactor.

The enzyme catalyses adenine + H2O + H(+) = hypoxanthine + NH4(+). The chain is Adenine deaminase from Escherichia coli (strain SE11).